Consider the following 360-residue polypeptide: Phenylalanine--tRNA ligase alpha subunit (360 aa).

Glu-260 serves as a coordination point for Mg(2+).

It belongs to the class-II aminoacyl-tRNA synthetase family. Phe-tRNA synthetase alpha subunit type 1 subfamily. Tetramer of two alpha and two beta subunits. It depends on Mg(2+) as a cofactor.

Its subcellular location is the cytoplasm. The enzyme catalyses tRNA(Phe) + L-phenylalanine + ATP = L-phenylalanyl-tRNA(Phe) + AMP + diphosphate + H(+). This Bartonella tribocorum (strain CIP 105476 / IBS 506) protein is Phenylalanine--tRNA ligase alpha subunit.